The following is a 466-amino-acid chain: Adenosylhomocysteinase (466 aa).

Substrate-binding residues include Thr-57, Asp-132, and Glu-192. An NAD(+)-binding site is contributed by 193–195; sequence TTT. The substrate site is built by Lys-222 and Asp-226. NAD(+) contacts are provided by residues Asn-227, 256-261, Glu-279, Asn-314, 335-337, and Asn-380; these read GYGDVG and IGH.

The protein belongs to the adenosylhomocysteinase family. It depends on NAD(+) as a cofactor.

It is found in the cytoplasm. The enzyme catalyses S-adenosyl-L-homocysteine + H2O = L-homocysteine + adenosine. It functions in the pathway amino-acid biosynthesis; L-homocysteine biosynthesis; L-homocysteine from S-adenosyl-L-homocysteine: step 1/1. In terms of biological role, may play a key role in the regulation of the intracellular concentration of adenosylhomocysteine. The protein is Adenosylhomocysteinase of Rhizobium rhizogenes (strain K84 / ATCC BAA-868) (Agrobacterium radiobacter).